The following is a 427-amino-acid chain: Glutamate-1-semialdehyde 2,1-aminomutase (427 aa).

N6-(pyridoxal phosphate)lysine is present on K265.

The protein belongs to the class-III pyridoxal-phosphate-dependent aminotransferase family. HemL subfamily. In terms of assembly, homodimer. Requires pyridoxal 5'-phosphate as cofactor.

The protein localises to the cytoplasm. The catalysed reaction is (S)-4-amino-5-oxopentanoate = 5-aminolevulinate. It participates in porphyrin-containing compound metabolism; protoporphyrin-IX biosynthesis; 5-aminolevulinate from L-glutamyl-tRNA(Glu): step 2/2. This chain is Glutamate-1-semialdehyde 2,1-aminomutase, found in Stutzerimonas stutzeri (strain A1501) (Pseudomonas stutzeri).